The primary structure comprises 237 residues: Orotidine 5'-phosphate decarboxylase (237 aa).

Substrate contacts are provided by residues aspartate 11, lysine 34, 61-70, threonine 124, arginine 186, glutamine 195, glycine 215, and arginine 216; that span reads DLKLHDIPNT. Lysine 63 functions as the Proton donor in the catalytic mechanism.

It belongs to the OMP decarboxylase family. Type 1 subfamily. As to quaternary structure, homodimer.

The catalysed reaction is orotidine 5'-phosphate + H(+) = UMP + CO2. It participates in pyrimidine metabolism; UMP biosynthesis via de novo pathway; UMP from orotate: step 2/2. Its function is as follows. Catalyzes the decarboxylation of orotidine 5'-monophosphate (OMP) to uridine 5'-monophosphate (UMP). The chain is Orotidine 5'-phosphate decarboxylase from Lactococcus lactis subsp. lactis (strain IL1403) (Streptococcus lactis).